A 72-amino-acid polypeptide reads, in one-letter code: DNA-directed RNA polymerase subunit omega (72 aa).

The protein belongs to the RNA polymerase subunit omega family. The RNAP catalytic core consists of 2 alpha, 1 beta, 1 beta' and 1 omega subunit. When a sigma factor is associated with the core the holoenzyme is formed, which can initiate transcription.

It carries out the reaction RNA(n) + a ribonucleoside 5'-triphosphate = RNA(n+1) + diphosphate. In terms of biological role, promotes RNA polymerase assembly. Latches the N- and C-terminal regions of the beta' subunit thereby facilitating its interaction with the beta and alpha subunits. The sequence is that of DNA-directed RNA polymerase subunit omega (rpoZ) from Clostridium tetani (strain Massachusetts / E88).